Reading from the N-terminus, the 49-residue chain is Single-stranded DNA-binding protein (49 aa).

Homodimer in the absence of DNA, monomer when binding DNA.

Functionally, binds preferentially to single-stranded DNA and therefore, destabilizes double-stranded DNA. It is involved in DNA replication, repair and recombination. Binds ss-DNA as the replication fork advances and stimulates the replisome processivity and accuracy. The chain is Single-stranded DNA-binding protein (32) from Enterobacteria phage RB9 (Bacteriophage RB9).